Reading from the N-terminus, the 107-residue chain is Iron-sulfur cluster assembly protein CyaY (107 aa).

This sequence belongs to the frataxin family.

Functionally, involved in iron-sulfur (Fe-S) cluster assembly. May act as a regulator of Fe-S biogenesis. The sequence is that of Iron-sulfur cluster assembly protein CyaY from Thioalkalivibrio sulfidiphilus (strain HL-EbGR7).